Consider the following 384-residue polypeptide: V-type proton ATPase subunit C 2 (384 aa).

Belongs to the V-ATPase C subunit family. V-ATPase is a heteromultimeric enzyme made up of two complexes: the ATP-hydrolytic V1 complex and the proton translocation V0 complex. The V1 complex consists of three catalytic AB heterodimers that form a heterohexamer, three peripheral stalks each consisting of EG heterodimers, one central rotor including subunits D and F, and the regulatory subunits C and H. The proton translocation complex V0 consists of the proton transport subunit a, a ring of proteolipid subunits c9c'', rotary subunit d, subunits e and f, and the accessory subunits vah-19/Ac45 and vah-20/PRR.

In terms of biological role, subunit of the V1 complex of vacuolar(H+)-ATPase (V-ATPase), a multisubunit enzyme composed of a peripheral complex (V1) that hydrolyzes ATP and a membrane integral complex (V0) that translocates protons. V-ATPase is responsible for acidifying and maintaining the pH of intracellular compartments and in some cell types, is targeted to the plasma membrane, where it is responsible for acidifying the extracellular environment. Subunit C is necessary for the assembly of the catalytic sector of the enzyme and is likely to have a specific function in its catalytic activity. The sequence is that of V-type proton ATPase subunit C 2 (VATC) from Ascidia sydneiensis samea (Vanadium-rich ascidian).